A 583-amino-acid polypeptide reads, in one-letter code: Putative fatty-acid--CoA ligase fadD25 (583 aa).

Helical transmembrane passes span 77 to 97, 109 to 129, and 229 to 249; these read YVVS…LSIP, VFAD…DNVV, and FVLG…TSPI. The segment at 353-375 is disordered; that stretch reads IVQFDPQKLPDGQAERTESDGGT.

This sequence belongs to the ATP-dependent AMP-binding enzyme family.

Its subcellular location is the cell membrane. The sequence is that of Putative fatty-acid--CoA ligase fadD25 (fadD25) from Mycobacterium tuberculosis (strain CDC 1551 / Oshkosh).